We begin with the raw amino-acid sequence, 697 residues long: Putative flagellar export/assembly protein LfhA (697 aa).

7 helical membrane passes run 19 to 39 (VPLV…PALL), 40 to 60 (DILF…AVSA), 66 to 86 (FSLF…LNVA), 116 to 136 (GNFV…FIVV), 204 to 224 (AIAG…IGIF), 242 to 262 (IGDG…AAII), and 280 to 302 (LLAS…VVPG).

Belongs to the FHIPEP (flagella/HR/invasion proteins export pore) family.

The protein localises to the cell inner membrane. In terms of biological role, part of the flagellar gene cluster Flag-2. However, the Flag-2 flagellar system could be inactive in strain 042 due to a frameshift in lfgC. In Escherichia coli O44:H18 (strain 042 / EAEC), this protein is Putative flagellar export/assembly protein LfhA.